Reading from the N-terminus, the 116-residue chain is HTH-type transcriptional regulator AnsR (116 aa).

Residues 6 to 60 (LTELRKKKNWSLQYTADLLGIAKSTYAGYESGYRRPSLEALAMLADLFDTTCDEL) enclose the HTH cro/C1-type domain. Residues 17-36 (LQYTADLLGIAKSTYAGYES) constitute a DNA-binding region (H-T-H motif).

In terms of biological role, transcriptional repressor for the ans operon coding for L-asparaginase and L-aspartase. NH4(+) may influence this repression. The protein is HTH-type transcriptional regulator AnsR (ansR) of Bacillus subtilis (strain 168).